Consider the following 358-residue polypeptide: 5,10-methenyltetrahydromethanopterin hydrogenase (358 aa).

It belongs to the HMD family. As to quaternary structure, homotetramer.

It catalyses the reaction 5,10-methenyl-5,6,7,8-tetrahydromethanopterin + H2 = 5,10-methylenetetrahydromethanopterin + H(+). The protein operates within one-carbon metabolism; methanogenesis from CO(2); 5,10-methylene-5,6,7,8-tetrahydromethanopterin from 5,10-methenyl-5,6,7,8-tetrahydromethanopterin (hydrogen route): step 1/1. Its activity is regulated as follows. Activity requires salt; 100 mM potassium phosphate, potassium chloride, and sodium chloride are equally effective. Catalyzes the reversible reduction of methenyl-H(4)MPT(+) to methylene-H(4)MPT. This chain is 5,10-methenyltetrahydromethanopterin hydrogenase, found in Methanopyrus kandleri (strain AV19 / DSM 6324 / JCM 9639 / NBRC 100938).